A 312-amino-acid chain; its full sequence is Olfactory receptor 6C75 (312 aa).

Residues 1-23 (MRNSTAVTDFILLGLTSDPQWQV) are Extracellular-facing. N-linked (GlcNAc...) asparagine glycosylation occurs at Asn-3. A helical membrane pass occupies residues 24-44 (VLFIFLLVTYMLSVTGNLIII). The Cytoplasmic portion of the chain corresponds to 45 to 63 (TLTLSDPHLQTPMYFFLRN). Residues 64–84 (FSFLEISFTSVCIPRFLVTVV) traverse the membrane as a helical segment. The Extracellular portion of the chain corresponds to 85–95 (TGNRTISYNGC). Cys-95 and Cys-177 are disulfide-bonded. Residues 96 to 116 (VAQLFFFIFLGVTEFYLLAAM) form a helical membrane-spanning segment. At 117-140 (SYDRCMAICKPLHYTIIMSTRVCT) the chain is on the cytoplasmic side. The chain crosses the membrane as a helical span at residues 141 to 161 (LLVFSSWLAGFLIIFPPVMLL). Residues 162–194 (LQLDFCASNVIDHFICDSSPMLQLSCTNTHFLE) are Extracellular-facing. A helical membrane pass occupies residues 195 to 215 (LMAFFLAVVTLMVTLTLVILS). The Cytoplasmic portion of the chain corresponds to 216–237 (YTNIIRTILKIPSMSQRKKAFS). A helical transmembrane segment spans residues 238-258 (TCSSHMIVVSISYSSCIFMYI). At 259–269 (KTSARERVTLS) the chain is on the extracellular side. The chain crosses the membrane as a helical span at residues 270-290 (KGVAVLNTSVAPLLNPFIYTL). The Cytoplasmic portion of the chain corresponds to 291 to 312 (RNKQVKQAFKSMVQKMIFSLNK).

It belongs to the G-protein coupled receptor 1 family.

The protein resides in the cell membrane. Odorant receptor. This is Olfactory receptor 6C75 (OR6C75) from Homo sapiens (Human).